Consider the following 732-residue polypeptide: X-ray repair cross-complementing protein 5 (732 aa).

The VWFA domain occupies 9–231; it reads AVVLCMDVGF…DEIYSFSESL (223 aa). The segment at 138–165 is leucine-zipper; sequence LSSRFSKSQLDIIIHSLKKCDISLQFFL. Position 144 is an N6-acetyllysine (Lys-144). A Glycyl lysine isopeptide (Lys-Gly) (interchain with G-Cter in SUMO2) cross-link involves residue Lys-195. In terms of domain architecture, Ku spans 253–452; that stretch reads IGSNLSIRIA…KYAPTEAQLN (200 aa). Ser-255 and Ser-258 each carry phosphoserine. Lys-265 is subject to N6-acetyllysine. Ser-318 is modified (phosphoserine). Lys-332 bears the N6-acetyllysine mark. Residues Lys-532 and Lys-534 each participate in a glycyl lysine isopeptide (Lys-Gly) (interchain with G-Cter in SUMO2) cross-link. Thr-535 bears the Phosphothreonine mark. Residues Lys-566 and Lys-568 each participate in a glycyl lysine isopeptide (Lys-Gly) (interchain with G-Cter in SUMO2) cross-link. Ser-577, Ser-579, and Ser-580 each carry phosphoserine; by PRKDC. Lys-660 and Lys-665 each carry N6-acetyllysine. Residues Lys-669 and Lys-688 each participate in a glycyl lysine isopeptide (Lys-Gly) (interchain with G-Cter in SUMO2) cross-link. Thr-715 bears the Phosphothreonine; by PRKDC mark. Positions 720-728 match the EEXXXDL motif motif; the sequence is EEGGDVDDL.

It belongs to the ku80 family. As to quaternary structure, heterodimer composed of XRCC5/Ku80 and XRCC6/Ku70; heterodimerization stabilizes XRCC5 protein. Component of the core long-range non-homologous end joining (NHEJ) complex (also named DNA-PK complex) composed of PRKDC, LIG4, XRCC4, XRCC6/Ku70, XRCC5/Ku86 and NHEJ1/XLF. Additional component of the NHEJ complex includes PAXX. Following autophosphorylation, PRKDC dissociates from DNA, leading to formation of the short-range NHEJ complex, composed of LIG4, XRCC4, XRCC6/Ku70, XRCC5/Ku86 and NHEJ1/XLF. The XRCC5-XRCC6 dimer also associates with NAA15, and this complex displays DNA binding activity towards the osteocalcin FGF response element (OCFRE). In addition, XRCC5 binds to the osteoblast-specific transcription factors MSX2 and RUNX2. Interacts with ELF3. Interacts with APLF (via KBM motif). The XRCC5/XRCC6 dimer associates in a DNA-dependent manner with APEX1. Identified in a complex with DEAF1 and XRCC6. Interacts with NR4A3; the DNA-dependent protein kinase complex DNA-PK phosphorylates and activates NR4A3 and prevents NR4A3 ubiquitinylation and degradation. Interacts with RNF138. Interacts with CYREN isoform 1 (CYREN-1) and isoform 4 (CYREN-2) (via KBM motif). Interacts with WRN (via KBM motif). Interacts (via N-terminus) with HSF1 (via N-terminus); this interaction is direct and prevents XRCC5/XRCC6 heterodimeric binding and non-homologous end joining (NHEJ) repair activities induced by ionizing radiation (IR). Interacts with DHX9; this interaction occurs in a RNA-dependent manner. Part of the HDP-RNP complex composed of at least HEXIM1, PRKDC, XRCC5, XRCC6, paraspeckle proteins (SFPQ, NONO, PSPC1, RBM14, and MATR3) and NEAT1 RNA. Interacts with ERCC6. The XRCC5-XRCC6 dimer associates with ALKBH2. Interacts with TPRN; TPRN interacts with a number of DNA damage response proteins, is recruited to sites of DNA damage and may play a role in DNA damage repair. Interacts with ERCC6L2. In terms of assembly, (Microbial infection) Interacts with human T-cell leukemia virus 1/HTLV-1 protein HBZ. Post-translationally, ADP-ribosylated by PARP3. In terms of processing, phosphorylated on serine residues. Phosphorylation by PRKDC may enhance helicase activity. Sumoylated. Post-translationally, ubiquitinated by RNF8 via 'Lys-48'-linked ubiquitination following DNA damage, leading to its degradation and removal from DNA damage sites. Ubiquitinated by RNF138, leading to remove the Ku complex from DNA breaks.

Its subcellular location is the nucleus. It localises to the nucleolus. It is found in the chromosome. Single-stranded DNA-dependent ATP-dependent helicase that plays a key role in DNA non-homologous end joining (NHEJ) by recruiting DNA-PK to DNA. Required for double-strand break repair and V(D)J recombination. Also has a role in chromosome translocation. The DNA helicase II complex binds preferentially to fork-like ends of double-stranded DNA in a cell cycle-dependent manner. It works in the 3'-5' direction. During NHEJ, the XRCC5-XRRC6 dimer performs the recognition step: it recognizes and binds to the broken ends of the DNA and protects them from further resection. Binding to DNA may be mediated by XRCC6. The XRCC5-XRRC6 dimer acts as a regulatory subunit of the DNA-dependent protein kinase complex DNA-PK by increasing the affinity of the catalytic subunit PRKDC to DNA by 100-fold. The XRCC5-XRRC6 dimer is probably involved in stabilizing broken DNA ends and bringing them together. The assembly of the DNA-PK complex to DNA ends is required for the NHEJ ligation step. The XRCC5-XRRC6 dimer probably also acts as a 5'-deoxyribose-5-phosphate lyase (5'-dRP lyase), by catalyzing the beta-elimination of the 5' deoxyribose-5-phosphate at an abasic site near double-strand breaks. XRCC5 probably acts as the catalytic subunit of 5'-dRP activity, and allows to 'clean' the termini of abasic sites, a class of nucleotide damage commonly associated with strand breaks, before such broken ends can be joined. The XRCC5-XRRC6 dimer together with APEX1 acts as a negative regulator of transcription. In association with NAA15, the XRCC5-XRRC6 dimer binds to the osteocalcin promoter and activates osteocalcin expression. As part of the DNA-PK complex, involved in the early steps of ribosome assembly by promoting the processing of precursor rRNA into mature 18S rRNA in the small-subunit processome. Binding to U3 small nucleolar RNA, recruits PRKDC and XRCC5/Ku86 to the small-subunit processome. Plays a role in the regulation of DNA virus-mediated innate immune response by assembling into the HDP-RNP complex, a complex that serves as a platform for IRF3 phosphorylation and subsequent innate immune response activation through the cGAS-STING pathway. This is X-ray repair cross-complementing protein 5 (XRCC5) from Homo sapiens (Human).